Here is a 562-residue protein sequence, read N- to C-terminus: Apical membrane antigen 1 (562 aa).

An N-terminal signal peptide occupies residues 1-21 (MNKIYCILFLSAQCLVHMGKC). Topologically, residues 22 to 484 (EPNQKPSRLT…QYAQGESKNQ (463 aa)) are extracellular. N-linked (GlcNAc...) asparagine glycosylation is found at N84 and N176. Intrachain disulfides connect C94–C247, C162–C192, C208–C220, C265–C363, C282–C354, C388–C444, C432–C449, and C434–C451. An N-linked (GlcNAc...) asparagine glycan is attached at N226. N-linked (GlcNAc...) asparagine glycosylation is found at N405 and N441. A helical membrane pass occupies residues 485–507 (MLLIIIGITGGVCVVALASMFYF). Topologically, residues 508–562 (RKKAHNDKYDKMEQADGYGKPTTRKDEMLDPEASFWGEEKRASHTTPVLMEKPYY) are cytoplasmic. Residues 519–543 (MEQADGYGKPTTRKDEMLDPEASFW) are disordered.

It belongs to the apicomplexan parasites AMA1 family.

The protein localises to the membrane. Its function is as follows. Involved in parasite invasion of erythrocytes. The chain is Apical membrane antigen 1 (AMA-1) from Plasmodium fragile.